We begin with the raw amino-acid sequence, 257 residues long: AT-hook motif nuclear-localized protein 16 (257 aa).

The segment at 1 to 71 is disordered; sequence MAGGTALTPT…SKNKPKPPII (71 aa). Positions 53–65 form a DNA-binding region, a.T hook; the sequence is KRPRGRPAGSKNK. Positions 77–214 constitute a PPC domain; it reads PNSLRANAVE…DEAASMQNQQ (138 aa).

As to quaternary structure, interacts with FVE/MSI4 and MSI5 which are components of HDAC corepressor complexes. As to expression, preferentially expressed in the inflorescence meristem and young floral buds, as well as in seedling-stage vegetative meristems. Widely expressed in flowers, roots and stems, with relatively low expression in leaves.

The protein resides in the nucleus. Transcription factor that specifically binds AT-rich DNA sequences related to the nuclear matrix attachment regions (MARs). Encodes a nuclear matrix protein that acts in the maintenance of genomic integrity by silencing TEs and repeat-containing genes through epigenetic machinery. Acts as a chromatin remodeling factor that modifies the architecture of FLC and FWA chromatin by modulating both H3 acetylation and methylation leading to the regulation of FLC and FWA expression. Negatively regulates floral repressors including MAF4 and MAF5. Plays a transcription activation role in anther development. Regulates the expression of arabinogalactan proteins (AGPs) involved in the formation of the nexine layer of the pollen wall. Binds AGP6, AGP11, AGP23 and AGP40 promoters. This chain is AT-hook motif nuclear-localized protein 16, found in Arabidopsis thaliana (Mouse-ear cress).